Here is a 58-residue protein sequence, read N- to C-terminus: Probable U-exon protein (58 aa).

In Snake adenovirus serotype 1 (SnAdV-1), this protein is Probable U-exon protein.